Consider the following 278-residue polypeptide: ATP-dependent dethiobiotin synthetase BioD 1 (278 aa).

Position 51 to 56 (51 to 56 (NVGKTI)) interacts with ATP. T55 lines the Mg(2+) pocket. K76 is an active-site residue. D102 serves as a coordination point for ATP. 2 residues coordinate Mg(2+): D102 and E163. ATP-binding positions include 223–224 (NR) and 252–254 (PYI).

The protein belongs to the dethiobiotin synthetase family. In terms of assembly, homodimer. Mg(2+) serves as cofactor.

It is found in the cytoplasm. It catalyses the reaction (7R,8S)-7,8-diammoniononanoate + CO2 + ATP = (4R,5S)-dethiobiotin + ADP + phosphate + 3 H(+). It participates in cofactor biosynthesis; biotin biosynthesis; biotin from 7,8-diaminononanoate: step 1/2. In terms of biological role, catalyzes a mechanistically unusual reaction, the ATP-dependent insertion of CO2 between the N7 and N8 nitrogen atoms of 7,8-diaminopelargonic acid (DAPA, also called 7,8-diammoniononanoate) to form a ureido ring. This is ATP-dependent dethiobiotin synthetase BioD 1 from Haemophilus ducreyi (strain 35000HP / ATCC 700724).